The chain runs to 22 residues: uncharacterized protein (22 aa).

A disordered region spans residues 1-22 (MHNSIAYDKDGNSTGQKYYAYG).

This is an uncharacterized protein from Lactobacillus helveticus (Lactobacillus suntoryeus).